The primary structure comprises 301 residues: 4-diphosphocytidyl-2-C-methyl-D-erythritol kinase (301 aa).

K18 is an active-site residue. 109 to 119 (PIASGIGGGSA) serves as a coordination point for ATP. Residue D151 is part of the active site.

Belongs to the GHMP kinase family. IspE subfamily.

The catalysed reaction is 4-CDP-2-C-methyl-D-erythritol + ATP = 4-CDP-2-C-methyl-D-erythritol 2-phosphate + ADP + H(+). It functions in the pathway isoprenoid biosynthesis; isopentenyl diphosphate biosynthesis via DXP pathway; isopentenyl diphosphate from 1-deoxy-D-xylulose 5-phosphate: step 3/6. In terms of biological role, catalyzes the phosphorylation of the position 2 hydroxy group of 4-diphosphocytidyl-2C-methyl-D-erythritol. In Rhizobium meliloti (strain 1021) (Ensifer meliloti), this protein is 4-diphosphocytidyl-2-C-methyl-D-erythritol kinase.